A 156-amino-acid polypeptide reads, in one-letter code: UPF0232 protein BL0636 (156 aa).

The protein belongs to the UPF0232 family.

The chain is UPF0232 protein BL0636 from Bifidobacterium longum (strain NCC 2705).